Here is a 605-residue protein sequence, read N- to C-terminus: Formin-binding protein 1-like (605 aa).

The region spanning 1–263 is the F-BAR domain; that stretch reads MSWGTELWDQ…AAKSVDERRD (263 aa). Residues 66–258 are a coiled coil; that stretch reads FTSCIAFFNI…EGMILAAKSV (193 aa). An interaction with CDC42 region spans residues 245–535; that stretch reads SKCLEGMILA…EFDDEFEDDD (291 aa). Position 295 is a phosphoserine (serine 295). Positions 325–345 are disordered; the sequence is FGKKPKPQSPPLTPTSLFTSS. Residues 392-484 adopt a coiled-coil conformation; it reads LEDFSHLPPE…VEGKTGVRGD (93 aa). The region spanning 397–474 is the REM-1 domain; it reads HLPPEQRRKK…IHKNEAWLSE (78 aa). The span at 480–490 shows a compositional bias: basic and acidic residues; it reads GVRGDRRHSSD. The tract at residues 480–539 is disordered; the sequence is GVRGDRRHSSDINHLVTQGRESPEGSYTDDANQEVRGPPQQHGHHSEFDDEFEDDDPLPA. Serine 488, serine 501, and serine 505 each carry phosphoserine. Residues 522-605 form an interaction with DNM1 region; the sequence is GHHSEFDDEF…VTLEKNSKGS (84 aa). Residues 527–536 are compositionally biased toward acidic residues; it reads FDDEFEDDDP. The SH3 domain maps to 538–599; sequence PAIGHCKAIY…PTTYIDVTLE (62 aa). The interval 541–597 is interaction with DNM2 and WASL; the sequence is GHCKAIYPFDGHNEGTLAMKEGEVLYIIEEDKGDGWTRARRQNGEEGYVPTTYIDVT. The segment at 541 to 605 is interaction with DAAM1, DIAPH1 and DIAPH2; that stretch reads GHCKAIYPFD…VTLEKNSKGS (65 aa).

The protein belongs to the FNBP1 family. Homodimerizes, the dimers can polymerize end-to-end to form filamentous structures. Interacts with GTP-bound CDC42. Interacts with DAAM1, DIAPH1, DIAPH2, DNM1, DNM2 and WASL/N-WASP. Interacts with ATG3. Interacts (via SH3 domain) with ABI1, WASF2, CDC42 and WIPF1. In terms of tissue distribution, isoform 1 is expressed in brain. Isoform 2 is expressed in brain, kidney and lung. Within the brain expression is seen in cortical neurons, hippocampal pyramidal neurons, hypothalamus and piriform cortex.

It is found in the cytoplasm. The protein localises to the cytoskeleton. Its subcellular location is the cell cortex. It localises to the cytoplasmic vesicle. The protein resides in the cell membrane. Functionally, required to coordinate membrane tubulation with reorganization of the actin cytoskeleton during endocytosis. May bind to lipids such as phosphatidylinositol 4,5-bisphosphate and phosphatidylserine and promote membrane invagination and the formation of tubules. Also promotes CDC42-induced actin polymerization by activating the WASL-WASPIP complex, the predominant form of WASL/N-WASP in cells. Actin polymerization may promote the fission of membrane tubules to form endocytic vesicles. Essential for autophagy of intracellular bacterial pathogens. May negatively regulate neurite extension and axon branching in developing neurons. The polypeptide is Formin-binding protein 1-like (Fnbp1l) (Rattus norvegicus (Rat)).